A 629-amino-acid chain; its full sequence is mRNA cleavage and polyadenylation factor CLP1 (629 aa).

Residues glutamate 21 and lysine 72 each coordinate ATP. The interval 142–166 (YIAPRTTDPNTETESDPSGTAAATV) is disordered. The span at 148-159 (TDPNTETESDPS) shows a compositional bias: polar residues. Position 183–188 (183–188 (SAGKTS)) interacts with ATP. The disordered stretch occupies residues 562–582 (PPRGGGGAGQPDSSTNPTDDE).

The protein belongs to the Clp1 family. Clp1 subfamily. Component of a pre-mRNA cleavage factor complex. Interacts directly with PCF11.

Its subcellular location is the nucleus. Its function is as follows. Required for endonucleolytic cleavage during polyadenylation-dependent pre-mRNA 3'-end formation. This is mRNA cleavage and polyadenylation factor CLP1 from Mycosarcoma maydis (Corn smut fungus).